The primary structure comprises 241 residues: Probable transcriptional regulatory protein lmo1535 (241 aa).

Residues 1-14 (MSGHSKWNNIQGRK) are compositionally biased toward polar residues. A disordered region spans residues 1-22 (MSGHSKWNNIQGRKNAQDSKRS).

The protein belongs to the TACO1 family.

It localises to the cytoplasm. The protein is Probable transcriptional regulatory protein lmo1535 of Listeria monocytogenes serovar 1/2a (strain ATCC BAA-679 / EGD-e).